The sequence spans 57 residues: Ribosome modulation factor 1 (57 aa).

The span at 1–14 (MKRQKRDRQSRAHT) shows a compositional bias: basic residues. Positions 1–24 (MKRQKRDRQSRAHTRGYQAGISGR) are disordered.

Belongs to the ribosome modulation factor family.

It is found in the cytoplasm. In terms of biological role, during stationary phase, converts 70S ribosomes to an inactive dimeric form (100S ribosomes). This is Ribosome modulation factor 1 from Colwellia psychrerythraea (strain 34H / ATCC BAA-681) (Vibrio psychroerythus).